Reading from the N-terminus, the 426-residue chain is Glutamate-1-semialdehyde 2,1-aminomutase (426 aa).

At Lys265 the chain carries N6-(pyridoxal phosphate)lysine.

This sequence belongs to the class-III pyridoxal-phosphate-dependent aminotransferase family. HemL subfamily. Homodimer. It depends on pyridoxal 5'-phosphate as a cofactor.

Its subcellular location is the cytoplasm. It carries out the reaction (S)-4-amino-5-oxopentanoate = 5-aminolevulinate. It participates in porphyrin-containing compound metabolism; protoporphyrin-IX biosynthesis; 5-aminolevulinate from L-glutamyl-tRNA(Glu): step 2/2. This chain is Glutamate-1-semialdehyde 2,1-aminomutase, found in Salmonella choleraesuis (strain SC-B67).